We begin with the raw amino-acid sequence, 402 residues long: Nodulation protein E (402 aa).

The Ketosynthase family 3 (KS3) domain maps to 2–401; that stretch reads DRRVVITGMG…GTNAVLAFKQ (400 aa). Catalysis depends on for beta-ketoacyl synthase activity residues Cys162, His294, and His331. A helical transmembrane segment spans residues 329-348; that stretch reads HAHCIGAASALEMIACVMAI.

The protein belongs to the thiolase-like superfamily. Beta-ketoacyl-ACP synthases family.

The protein localises to the cell inner membrane. In terms of biological role, proposed to synthesize NOD factor fatty acyl chain. Involved in the synthesis of a highly unsaturated fatty acid moiety, which forms part of a lipo-oligosaccharide that is responsible for host specificity. This is Nodulation protein E (nodE) from Rhizobium meliloti (strain 1021) (Ensifer meliloti).